Reading from the N-terminus, the 239-residue chain is Purine nucleoside phosphorylase DeoD-type (239 aa).

His-5 lines the a purine D-ribonucleoside pocket. Phosphate contacts are provided by residues Gly-21, Arg-25, Arg-44, and 88–91 (RVGS). Residues 180 to 182 (EME) and 204 to 205 (SD) contribute to the a purine D-ribonucleoside site. Asp-205 functions as the Proton donor in the catalytic mechanism.

Belongs to the PNP/UDP phosphorylase family. As to quaternary structure, homohexamer; trimer of homodimers.

The catalysed reaction is a purine D-ribonucleoside + phosphate = a purine nucleobase + alpha-D-ribose 1-phosphate. It catalyses the reaction a purine 2'-deoxy-D-ribonucleoside + phosphate = a purine nucleobase + 2-deoxy-alpha-D-ribose 1-phosphate. Functionally, catalyzes the reversible phosphorolytic breakdown of the N-glycosidic bond in the beta-(deoxy)ribonucleoside molecules, with the formation of the corresponding free purine bases and pentose-1-phosphate. The sequence is that of Purine nucleoside phosphorylase DeoD-type from Pectobacterium atrosepticum (strain SCRI 1043 / ATCC BAA-672) (Erwinia carotovora subsp. atroseptica).